The following is a 285-amino-acid chain: Polyamine aminopropyltransferase (285 aa).

One can recognise a PABS domain in the interval 5–241 (DNWYIEHFQP…GWWSVTMASK (237 aa)). Position 35 (glutamine 35) interacts with S-methyl-5'-thioadenosine. Positions 66 and 90 each coordinate spermidine. S-methyl-5'-thioadenosine-binding positions include aspartate 110 and 141-142 (DG). The active-site Proton acceptor is the aspartate 160. 160–163 (DSTD) provides a ligand contact to spermidine. Proline 167 lines the S-methyl-5'-thioadenosine pocket.

The protein belongs to the spermidine/spermine synthase family. As to quaternary structure, homodimer or homotetramer.

Its subcellular location is the cytoplasm. It carries out the reaction S-adenosyl 3-(methylsulfanyl)propylamine + putrescine = S-methyl-5'-thioadenosine + spermidine + H(+). It functions in the pathway amine and polyamine biosynthesis; spermidine biosynthesis; spermidine from putrescine: step 1/1. Its function is as follows. Catalyzes the irreversible transfer of a propylamine group from the amino donor S-adenosylmethioninamine (decarboxy-AdoMet) to putrescine (1,4-diaminobutane) to yield spermidine. In Xanthomonas oryzae pv. oryzae (strain MAFF 311018), this protein is Polyamine aminopropyltransferase.